The sequence spans 428 residues: 26S proteasome regulatory subunit 7 (428 aa).

An ATP-binding site is contributed by 211–218 (GPPGTGKT).

It belongs to the AAA ATPase family.

Its subcellular location is the cytoplasm. It is found in the nucleus. Functionally, the 26S proteasome is involved in the ATP-dependent degradation of ubiquitinated proteins. The regulatory (or ATPase) complex confers ATP dependency and substrate specificity to the 26S complex. The chain is 26S proteasome regulatory subunit 7 (psmC2) from Dictyostelium discoideum (Social amoeba).